The chain runs to 82 residues: Small ribosomal subunit protein uS17 (82 aa).

This sequence belongs to the universal ribosomal protein uS17 family. As to quaternary structure, part of the 30S ribosomal subunit.

Functionally, one of the primary rRNA binding proteins, it binds specifically to the 5'-end of 16S ribosomal RNA. This chain is Small ribosomal subunit protein uS17, found in Shewanella pealeana (strain ATCC 700345 / ANG-SQ1).